A 190-amino-acid chain; its full sequence is MADKEKDAVIVDETEHVDVDSKESKKEKKTKQQQKIEFLEAEVKELNDKYLRTLAEAENFKKRIQAEKIMDRKYAASSFATELLVPYEQFSKIVDFPSDNELLNNFLIGFKMIRDQFKSVLENEGVVEIKALGEVFDAKVHHAIEKESNKDKPNGTVLEVLQNGYLFKDRILRPAMVKINEWSEDNGEDK.

Over residues 1–26 the composition is skewed to basic and acidic residues; the sequence is MADKEKDAVIVDETEHVDVDSKESKK. Positions 1 to 31 are disordered; it reads MADKEKDAVIVDETEHVDVDSKESKKEKKTK.

The protein belongs to the GrpE family. Homodimer.

It is found in the cytoplasm. Functionally, participates actively in the response to hyperosmotic and heat shock by preventing the aggregation of stress-denatured proteins, in association with DnaK and GrpE. It is the nucleotide exchange factor for DnaK and may function as a thermosensor. Unfolded proteins bind initially to DnaJ; upon interaction with the DnaJ-bound protein, DnaK hydrolyzes its bound ATP, resulting in the formation of a stable complex. GrpE releases ADP from DnaK; ATP binding to DnaK triggers the release of the substrate protein, thus completing the reaction cycle. Several rounds of ATP-dependent interactions between DnaJ, DnaK and GrpE are required for fully efficient folding. This is Protein GrpE from Acholeplasma laidlawii (strain PG-8A).